A 585-amino-acid chain; its full sequence is Protein DENND6B (585 aa).

A compositionally biased stretch (low complexity) spans 1-10; the sequence is MEVPVGPGPR. The disordered stretch occupies residues 1-25; that stretch reads MEVPVGPGPRQAGGGLGATRSSSSG. Positions 43–221 constitute a uDENN domain; sequence ECVCVVTFDL…IQVRIPSRVD (179 aa). The cDENN domain maps to 246–373; it reads VHELDLFRCF…VKLKKPSRLK (128 aa). Residues 375–499 enclose the dDENN domain; that stretch reads LDTKPGLYTS…KSPHFDGWYR (125 aa).

The protein belongs to the DENND6 family.

The protein localises to the recycling endosome. It is found in the cytoplasm. Its function is as follows. Guanine nucleotide exchange factor (GEF) for RAB14. Also has some, lesser GEF activity towards RAB35. The chain is Protein DENND6B (Dennd6b) from Mus musculus (Mouse).